Consider the following 349-residue polypeptide: Heme A synthase (349 aa).

The next 5 helical transmembrane spans lie at 15–35, 101–121, 132–152, 162–182, and 203–223; these read AVQV…VVGG, LLGR…ALTG, FGLF…VASG, YRLA…VAVA, and VLVG…GLDA. A heme-binding site is contributed by H265. 3 helical membrane-spanning segments follow: residues 268-288, 296-316, and 317-337; these read IAYL…RLGG, LVFA…VHMV, and PLDL…AAMI. H324 is a heme binding site.

Belongs to the COX15/CtaA family. Type 2 subfamily. Interacts with CtaB. Heme b serves as cofactor.

The protein resides in the cell membrane. The catalysed reaction is Fe(II)-heme o + 2 A + H2O = Fe(II)-heme a + 2 AH2. It participates in porphyrin-containing compound metabolism; heme A biosynthesis; heme A from heme O: step 1/1. Functionally, catalyzes the conversion of heme O to heme A by two successive hydroxylations of the methyl group at C8. The first hydroxylation forms heme I, the second hydroxylation results in an unstable dihydroxymethyl group, which spontaneously dehydrates, resulting in the formyl group of heme A. This Azorhizobium caulinodans (strain ATCC 43989 / DSM 5975 / JCM 20966 / LMG 6465 / NBRC 14845 / NCIMB 13405 / ORS 571) protein is Heme A synthase.